The chain runs to 421 residues: CinA-like protein (421 aa).

The protein belongs to the CinA family.

In Myxococcus xanthus (strain DK1622), this protein is CinA-like protein.